The chain runs to 172 residues: Counting factor-associated protein B (172 aa).

An N-terminal signal peptide occupies residues methionine 1–threonine 21. Asparagine 37 and asparagine 153 each carry an N-linked (GlcNAc...) asparagine glycan.

Its subcellular location is the secreted. This is Counting factor-associated protein B (cfaB) from Dictyostelium discoideum (Social amoeba).